The primary structure comprises 1200 residues: NACHT, LRR and PYD domains-containing protein 5 (1200 aa).

The 92-residue stretch at 57–148 folds into the Pyrin domain; it reads SLTFSSYGLQ…SEKARDDMKR (92 aa). Basic and acidic residues predominate over residues 142 to 152; the sequence is ARDDMKRHSPE. The segment at 142 to 232 is disordered; sequence ARDDMKRHSP…TEEQGHGGDT (91 aa). A compositionally biased stretch (polar residues) spans 173-182; it reads QAVQQDSATA. Low complexity-rich tracts occupy residues 192-202 and 209-221; these read QAMEQEGATAA and ISQA…ATAA. Positions 280-602 constitute an NACHT domain; it reads RTVVLHGKSG…ALYYVLEGLE (323 aa). Residue 286-293 coordinates ATP; that stretch reads GKSGIGKS. 13 LRR repeats span residues 704-727, 730-753, 780-803, 809-832, 836-863, 865-892, 893-916, 950-973, 979-1002, 1007-1034, 1036-1059, 1064-1092, and 1121-1142; these read LNSF…SFCL, CPYL…AEAC, HPHL…TLCA, TCKI…LWRI, NRNL…ALKH, KCLL…ILTT, SPSL…PLSD, NRSL…LLCR, HCSL…FLAL, NSWL…VMRE, SCHL…SLSC, SRHL…LKQK, and NRHL…MMKL.

This sequence belongs to the NLRP family. As to quaternary structure, component of the subcortical maternal complex (SCMC), at least composed of NLRP5, KHDC3, OOEP, and TLE6 isoform 1. Within the complex, interacts with OOEP, KHDC3L and TLE6. The SCMC may facilitate translocation of its components between the nuclear and cytoplasmic compartments. As part of the SCMC interacts with the SCMC-associated protein ZBED3. As part of the SCMC interacts with the SCMC-associated protein CFL1/Cofilin-1. Interacts with PRKCE. Interacts with TUBB3 at cytoskeleton microtubules. In terms of processing, phosphorylated by PRKCE. As to expression, expressed in cumulus cells (at protein level). Highly abundant in oocytes and early embryos, however poorly expressed in somatic tissues such as the liver and spinal cord.

It localises to the cytoplasm. The protein localises to the cytoplasmic vesicle. Its subcellular location is the secretory vesicle. It is found in the cortical granule. The protein resides in the mitochondrion. It localises to the nucleus. The protein localises to the nucleolus. Its subcellular location is the golgi apparatus. In terms of biological role, component of the subcortical maternal complex (SCMC), a multiprotein complex that plays a key role in early embryonic development. The SCMC complex is a structural constituent of cytoplasmic lattices, which consist in fibrous structures found in the cytoplasm of oocytes and preimplantation embryos. They are required to store maternal proteins critical for embryonic development, such as proteins that control epigenetic reprogramming of the preimplantation embryo, and prevent their degradation or activation. Required for the localization of cortical granules to the cortex of oocytes, via association with the cortical actin scaffold. Required for cortical actin clearance prior to oocyte exocytosis and prevention of polyspermy. Involved in regulating post-fertilization Ca(2+) release and endoplasmic reticulum storage (ER) storage via regulation of cellular localization. May be involved in the localization of mitochondria to the cytoplasm and perinuclear region in oocytes and early stage embryos, independent of its role in CPL formation. The protein is NACHT, LRR and PYD domains-containing protein 5 (NLRP5) of Homo sapiens (Human).